A 676-amino-acid polypeptide reads, in one-letter code: Envelope glycoprotein (676 aa).

An N-terminal signal peptide occupies residues 1 to 32; that stretch reads MEGLSLLQLPRDKFRKSSFFVWVIILFQKAFS. Residues 33-650 lie on the Extracellular side of the membrane; sequence MPLGVVTNST…DDNWWTGWRQ (618 aa). Residue N40 is glycosylated (N-linked (GlcNAc...) asparagine; by host). Cystine bridges form between C53–C609, C108–C135, C121–C147, C511–C556, and C601–C608. A receptor-binding region spans residues 54–201; that stretch reads KDHLASTDQL…TFLQSPPIRE (148 aa). Residues N204, N208, N238, N257, N268, N296, and N314 are each glycosylated (N-linked (GlcNAc...) asparagine; by host). Positions 305-485 are mucin-like region; it reads ELSFETLSLN…STSNGLITST (181 aa). The segment at 312-351 is disordered; that stretch reads SLNETEDDDATSSRTTKGRISDRATRKYSDLVPKDSPGMV. The segment covering 330–344 has biased composition (basic and acidic residues); the sequence is RISDRATRKYSDLVP. A glycan (N-linked (GlcNAc...) asparagine; by host) is linked at N366. Positions 406–458 are disordered; that stretch reads SSSQILSSSPTMAPSPETQTSTTYTPKLPVMTTEEPTTPPRNSPGSTTEAPTL. Polar residues-rich tracts occupy residues 415–430 and 448–458; these read PTMA…TTYT and SPGSTTEAPTL. N463 carries N-linked (GlcNAc...) asparagine; by host glycosylation. Positions 524-539 are fusion peptide; that stretch reads HNAAGIAWIPYFGPGA. The stretch at 554–595 forms a coiled coil; the sequence is LVCGLRQLANETTQALQLFLRATTELRTYTILNRKAIDFLLR. N563 carries an N-linked (GlcNAc...) asparagine; by host glycan. Positions 615-634 form a coiled coil; it reads WTKNITDKINQIIHDFIDNP. An N-linked (GlcNAc...) asparagine; by host glycan is attached at N618. A helical membrane pass occupies residues 651-671; the sequence is WIPAGIGITGIIIAIIALLCV. S-palmitoyl cysteine; by host attachment occurs at residues C670 and C672. The Cytoplasmic segment spans residues 672-676; it reads CKLLC.

This sequence belongs to the filoviruses glycoprotein family. As to quaternary structure, homotrimer; each monomer consists of a GP1 and a GP2 subunit linked by disulfide bonds. The resulting peplomers (GP1,2) protrude from the virus surface as spikes. Interacts with host integrin alpha-V/ITGAV. Interacts with host CLEC10A. Binds also to host CD209 and CLEC4M/DC-SIGN(R). Interacts with host FOLR1. Interacts with BST2; this interaction inhibits the antiviral effect of BST2 and this allows viral release from infected cells. Interacts with host FCN1; this interaction enhances viral entry. Interacts with host TLR4; this interaction induces cell death in T-lymphocytes or proinflammatory cytokines and SOCS1 production in monocytes. In terms of assembly, interacts with host entry receptor NPC1. GP1 and GP2delta are part of GP1,2delta soluble complexes released by ectodomain shedding. The signal peptide region modulates GP's high mannose glycosylation, thereby determining the efficiency of the interactions with DC-SIGN(R). In terms of processing, N-glycosylated. Post-translationally, O-glycosylated in the mucin-like region. Palmitoylation of GP2 is not required for its function. In terms of processing, specific enzymatic cleavages in vivo yield mature proteins. The precursor is processed into GP1 and GP2 by host cell furin in the trans Golgi, and maybe by other host proteases, to yield the mature GP1 and GP2 proteins. The cleavage site corresponds to the furin optimal cleavage sequence [KR]-X-[KR]-R. This cleavage does not seem to be required for function. After the internalization of the virus into cell endosomes, GP1 C-terminus is removed by the endosomal proteases cathepsin B, cathepsin L, or both, leaving a 19-kDa N-terminal fragment which is further digested by cathepsin B. Proteolytic processing of GP1,2 by host ADAM17 can remove the transmembrane anchor of GP2 and leads to shedding of complexes consisting in GP1 and truncated GP2 (GP1,2delta).

Its subcellular location is the virion membrane. The protein localises to the host cell membrane. It is found in the secreted. In terms of biological role, trimeric GP1,2 complexes form the virion surface spikes and mediate the viral entry processes, with GP1 acting as the receptor-binding subunit and GP2 as the membrane fusion subunit. At later times of infection, down-regulates the expression of various host cell surface molecules that are essential for immune surveillance and cell adhesion. Down-modulates several integrins including ITGA1, ITGA2, ITGA3, ITGA4, ITGA5, ITGA6, ITGAV and ITGB1. This decrease in cell adhesion molecules may lead to cell detachment, contributing to the disruption of blood vessel integrity and hemorrhages developed during infection (cytotoxicity). Interacts with host TLR4 and thereby stimulates the differentiation and activation of monocytes leading to bystander death of T-lymphocytes. Down-regulates as well the function of host natural killer cells. Counteracts the antiviral effect of host BST2/tetherin that restricts release of progeny virions from infected cells. However, cooperates with VP40 and host BST2 to activate canonical NF-kappa-B pathway in a manner dependent on neddylation. Functionally, functions as a decoy for anti-GP1,2 antibodies thereby contributing to viral immune evasion. Interacts and activates host macrophages and dendritic cells inducing up-regulation of cytokine transcription. This effect is mediated throught activation of host TLR4. Its function is as follows. Responsible for binding to the receptor(s) on target cells. Interacts with CD209/DC-SIGN and CLEC4M/DC-SIGNR which act as cofactors for virus entry into dendritic cells (DCs) and endothelial cells. Binding to the macrophage specific lectin CLEC10A also seems to enhance virus infectivity. Interaction with FOLR1/folate receptor alpha may be a cofactor for virus entry in some cell types, although results are contradictory. Members of the Tyro3 receptor tyrosine kinase family also seem to be cell entry factors in filovirus infection. Once attached, the virions are internalized through clathrin-dependent endocytosis and/or macropinocytosis. After internalization of the virus into the endosomes of the host cell, proteolysis of GP1 by two cysteine proteases, CTSB/cathepsin B and CTSL/cathepsin L removes the glycan cap and allows GP1 binding to the host entry receptor NPC1. NPC1-binding, Ca(2+) and acidic pH induce a conformational change of GP2, which unmasks its fusion peptide and permit membranes fusion. Acts as a class I viral fusion protein. Under the current model, the protein has at least 3 conformational states: pre-fusion native state, pre-hairpin intermediate state, and post-fusion hairpin state. During viral and target cell membrane fusion, the coiled coil regions (heptad repeats) assume a trimer-of-hairpins structure, positioning the fusion peptide in close proximity to the C-terminal region of the ectodomain. The formation of this structure appears to drive apposition and subsequent fusion of viral and target cell membranes. Responsible for penetration of the virus into the cell cytoplasm by mediating the fusion of the membrane of the endocytosed virus particle with the endosomal membrane. Low pH in endosomes induces an irreversible conformational change in GP2, releasing the fusion hydrophobic peptide. The polypeptide is Envelope glycoprotein (GP) (Sudan ebolavirus (strain Maleo-79) (SEBOV)).